Here is a 321-residue protein sequence, read N- to C-terminus: MLNKLIERENLSFEESYELFNVLLNESEMRIAAYLVALQTKGLTADEIAGFAKAMRDNAVKIDLGDVTDTCGTGGDGSKTINVSTAVSIILACFTKVAKHGNVSITSNSGSANVYKALGCKIPETPDDAKKSMDKTNFAFLFAQKYHPALKKIMPVRNELKVKTIFNILGPLANPANPKYQILGVNSSELCDNVAIALSKVGGIKKALVVYGNGLDELTPNGTSKITEYDGKFDTYEVTPKDFGLDYSKIIPCESPDESAKRLIDVFSGKINEDRNFILMNAAAALYTSEIASDFLDGVEIAKEAIESGKVLKKLEEIRNV.

5-phospho-alpha-D-ribose 1-diphosphate is bound by residues glycine 72, 75 to 76 (GD), threonine 80, 82 to 85 (NVST), 99 to 107 (KHGNVSITS), and serine 111. Anthranilate is bound at residue glycine 72. Serine 84 contacts Mg(2+). Position 102 (asparagine 102) interacts with anthranilate. An anthranilate-binding site is contributed by arginine 157. Mg(2+)-binding residues include aspartate 216 and glutamate 217.

The protein belongs to the anthranilate phosphoribosyltransferase family. As to quaternary structure, homodimer. Mg(2+) serves as cofactor.

The catalysed reaction is N-(5-phospho-beta-D-ribosyl)anthranilate + diphosphate = 5-phospho-alpha-D-ribose 1-diphosphate + anthranilate. Its pathway is amino-acid biosynthesis; L-tryptophan biosynthesis; L-tryptophan from chorismate: step 2/5. Catalyzes the transfer of the phosphoribosyl group of 5-phosphorylribose-1-pyrophosphate (PRPP) to anthranilate to yield N-(5'-phosphoribosyl)-anthranilate (PRA). This Methanococcus maripaludis (strain DSM 14266 / JCM 13030 / NBRC 101832 / S2 / LL) protein is Anthranilate phosphoribosyltransferase.